The chain runs to 108 residues: Cell division protein FtsL (108 aa).

Residues 1–24 (MSKDTASQPSLTKLIGLDIFGVGR) are Cytoplasmic-facing. A helical membrane pass occupies residues 25–45 (LHAILLICIFLSAIGVVLATH). Residues 46–108 (NTRQMTVQRE…PDKEVIIKLR (63 aa)) are Periplasmic-facing.

This sequence belongs to the FtsL family. Part of a complex composed of FtsB, FtsL and FtsQ.

It localises to the cell inner membrane. Functionally, essential cell division protein. May link together the upstream cell division proteins, which are predominantly cytoplasmic, with the downstream cell division proteins, which are predominantly periplasmic. This is Cell division protein FtsL from Aliivibrio fischeri (strain ATCC 700601 / ES114) (Vibrio fischeri).